A 179-amino-acid chain; its full sequence is Ubiquitin-conjugating enzyme E2 C (179 aa).

Residues 1–31 (MASQNVDPAAASSVASRKGQESGTSAARGSV) form a disordered region. Residues 30 to 179 (SVGKRLQQEL…YQKQVREKEI (150 aa)) enclose the UBC core domain. Catalysis depends on Cys114, which acts as the Glycyl thioester intermediate.

It belongs to the ubiquitin-conjugating enzyme family. Component of the APC/C complex. Autoubiquitinated by the APC/C complex, leading to its degradation by the proteasome.

It carries out the reaction S-ubiquitinyl-[E1 ubiquitin-activating enzyme]-L-cysteine + [E2 ubiquitin-conjugating enzyme]-L-cysteine = [E1 ubiquitin-activating enzyme]-L-cysteine + S-ubiquitinyl-[E2 ubiquitin-conjugating enzyme]-L-cysteine.. The catalysed reaction is S-ubiquitinyl-[E1 ubiquitin-activating enzyme]-L-cysteine + [acceptor protein]-L-lysine = [E1 ubiquitin-activating enzyme]-L-cysteine + N(6)-monoubiquitinyl-[acceptor protein]-L-lysine.. It participates in protein modification; protein ubiquitination. Its function is as follows. Catalyzes the covalent attachment of ubiquitin to other proteins. Acts as an essential factor of the anaphase promoting complex/cyclosome (APC/C), a cell cycle-regulated ubiquitin ligase that controls progression through mitosis. Acts by initiating 'Lys-11'-linked polyubiquitin chains on APC/C substrates, leading to the degradation of APC/C substrates by the proteasome and promoting mitotic exit. The chain is Ubiquitin-conjugating enzyme E2 C (ube2c) from Xenopus laevis (African clawed frog).